We begin with the raw amino-acid sequence, 71 residues long: Protein translocase subunit SecE (71 aa).

A helical membrane pass occupies residues Val43–Thr63.

It belongs to the SecE/SEC61-gamma family. In terms of assembly, component of the Sec protein translocase complex. Heterotrimer consisting of SecY (alpha), SecG (beta) and SecE (gamma) subunits. The heterotrimers can form oligomers, although 1 heterotrimer is thought to be able to translocate proteins. Interacts with the ribosome. May interact with SecDF, and other proteins may be involved.

It localises to the cell membrane. In terms of biological role, essential subunit of the Sec protein translocation channel SecYEG. Clamps together the 2 halves of SecY. May contact the channel plug during translocation. The chain is Protein translocase subunit SecE from Methanosarcina mazei (strain ATCC BAA-159 / DSM 3647 / Goe1 / Go1 / JCM 11833 / OCM 88) (Methanosarcina frisia).